A 157-amino-acid polypeptide reads, in one-letter code: Ubiquitin-like protein 4A (157 aa).

The region spanning 1–76 (MILTVKPLQG…LNLVVRPAGE (76 aa)) is the Ubiquitin-like domain.

In terms of assembly, component of the bag6/bat3 complex.

The protein resides in the cytoplasm. Its subcellular location is the cytosol. The protein localises to the nucleus. Functionally, as part of a cytosolic protein quality control complex, the bag6/bat3 complex, maintains misfolded and hydrophobic patches-containing proteins in a soluble state and participates in their proper delivery to the endoplasmic reticulum or alternatively can promote their sorting to the proteasome where they undergo degradation. The bag6/bat3 complex is involved in the post-translational delivery of tail-anchored/type II transmembrane proteins to the endoplasmic reticulum membrane. Similarly, the bag6/bat3 complex also functions as a sorting platform for proteins of the secretory pathway that are mislocalized to the cytosol either delivering them to the proteasome for degradation or to the endoplasmic reticulum. The bag6/bat3 complex also plays a role in the endoplasmic reticulum-associated degradation (ERAD), a quality control mechanism that eliminates unwanted proteins of the endoplasmic reticulum through their retrotranslocation to the cytosol and their targeting to the proteasome. It maintains these retrotranslocated proteins in an unfolded yet soluble state condition in the cytosol to ensure their proper delivery to the proteasome. The sequence is that of Ubiquitin-like protein 4A (ubl4a) from Danio rerio (Zebrafish).